The primary structure comprises 548 residues: Membrane protein insertase YidC (548 aa).

The helical transmembrane segment at 6–26 threads the bilayer; the sequence is NLLVIALLFVSFMIWQAWEQD. The interval 28–56 is disordered; it reads NPQPQTQQTTQTTTTAAGSAADQGVPASG. The span at 29-42 shows a compositional bias: low complexity; sequence PQPQTQQTTQTTTT. 4 helical membrane passes run 350 to 370, 424 to 444, 458 to 478, and 499 to 519; these read FVGNWGFSIIIITFIVRGIMY, FPLIIQMPIFLALYYMLMGSI, LSAQDPYYILPILMGVTMFFI, and PVIFTVFFLWFPSGLVLYYIV.

The protein belongs to the OXA1/ALB3/YidC family. Type 1 subfamily. As to quaternary structure, interacts with the Sec translocase complex via SecD. Specifically interacts with transmembrane segments of nascent integral membrane proteins during membrane integration.

It is found in the cell inner membrane. Its function is as follows. Required for the insertion and/or proper folding and/or complex formation of integral membrane proteins into the membrane. Involved in integration of membrane proteins that insert both dependently and independently of the Sec translocase complex, as well as at least some lipoproteins. Aids folding of multispanning membrane proteins. In Salmonella newport (strain SL254), this protein is Membrane protein insertase YidC.